The chain runs to 431 residues: Enolase (431 aa).

Gln167 lines the (2R)-2-phosphoglycerate pocket. Glu209 serves as the catalytic Proton donor. Mg(2+) contacts are provided by Asp246, Glu289, and Asp316. 4 residues coordinate (2R)-2-phosphoglycerate: Lys341, Arg370, Ser371, and Lys392. The active-site Proton acceptor is the Lys341.

Belongs to the enolase family. As to quaternary structure, component of the RNA degradosome, a multiprotein complex involved in RNA processing and mRNA degradation. It depends on Mg(2+) as a cofactor.

It localises to the cytoplasm. The protein localises to the secreted. The protein resides in the cell surface. It catalyses the reaction (2R)-2-phosphoglycerate = phosphoenolpyruvate + H2O. The protein operates within carbohydrate degradation; glycolysis; pyruvate from D-glyceraldehyde 3-phosphate: step 4/5. Catalyzes the reversible conversion of 2-phosphoglycerate (2-PG) into phosphoenolpyruvate (PEP). It is essential for the degradation of carbohydrates via glycolysis. This Shewanella sp. (strain MR-4) protein is Enolase.